Here is a 100-residue protein sequence, read N- to C-terminus: uncharacterized protein (100 aa).

This is an uncharacterized protein from Bacillus subtilis (strain 168).